We begin with the raw amino-acid sequence, 151 residues long: Protein NrdI (151 aa).

The protein belongs to the NrdI family.

Probably involved in ribonucleotide reductase function. The sequence is that of Protein NrdI from Mycoplasmopsis pulmonis (strain UAB CTIP) (Mycoplasma pulmonis).